Here is a 289-residue protein sequence, read N- to C-terminus: Ribonuclease HII (289 aa).

The disordered stretch occupies residues 1–55; it reads MIRDQAKTPGRAKSAAAAKASPAAKGGGNEAAQSAAGKAAAKPAAKPATSKSGKG. Composition is skewed to low complexity over residues 7-24 and 31-55; these read KTPG…SPAA and AAQS…SGKG. In terms of domain architecture, RNase H type-2 spans 76–264; the sequence is WPVAGCDEAG…VVAARRKHQP (189 aa). Residues aspartate 82, glutamate 83, and aspartate 173 each contribute to the a divalent metal cation site.

The protein belongs to the RNase HII family. It depends on Mn(2+) as a cofactor. Mg(2+) is required as a cofactor.

It localises to the cytoplasm. It catalyses the reaction Endonucleolytic cleavage to 5'-phosphomonoester.. Endonuclease that specifically degrades the RNA of RNA-DNA hybrids. The chain is Ribonuclease HII from Bradyrhizobium sp. (strain BTAi1 / ATCC BAA-1182).